The chain runs to 62 residues: Omega-conotoxin-like Bu11 (62 aa).

A signal peptide spans alanine 1–alanine 7. A propeptide spanning residues glutamate 8 to lysine 27 is cleaved from the precursor. 3 disulfide bridges follow: cysteine 31-cysteine 46, cysteine 38-cysteine 49, and cysteine 45-cysteine 56.

The protein belongs to the conotoxin O1 superfamily. As to expression, expressed by the venom duct.

The protein localises to the secreted. Functionally, omega-conotoxins act at presynaptic membranes, they bind and block voltage-gated calcium channels (Cav). In Conus bullatus (Bubble cone), this protein is Omega-conotoxin-like Bu11.